Consider the following 341-residue polypeptide: Probable 2' cyclic ADP-D-ribose synthase TcpO (341 aa).

One can recognise a TIR domain in the interval 204–336 (KEYDIFVSHS…EIIHEILERI (133 aa)). Residues 213–214 (SS) and Lys-243 contribute to the NAD(+) site. Residue Glu-279 is part of the active site.

The enzyme catalyses NAD(+) + H2O = ADP-D-ribose + nicotinamide + H(+). It catalyses the reaction NAD(+) = 2'cADPR + nicotinamide + H(+). In terms of biological role, NAD(+) hydrolase (NADase) that catalyzes cleavage of NAD(+) into ADP-D-ribose (ADPR) and nicotinamide. In addition to ADPR, also generates a cyclization variant of cyclic ADPR (cADPR), termed v-cADPR (probably 2'cADPR). In Methanobrevibacter olleyae, this protein is Probable 2' cyclic ADP-D-ribose synthase TcpO.